Here is a 211-residue protein sequence, read N- to C-terminus: Protein-L-isoaspartate O-methyltransferase (211 aa).

Ser-62 is an active-site residue.

The protein belongs to the methyltransferase superfamily. L-isoaspartyl/D-aspartyl protein methyltransferase family.

The protein resides in the cytoplasm. The enzyme catalyses [protein]-L-isoaspartate + S-adenosyl-L-methionine = [protein]-L-isoaspartate alpha-methyl ester + S-adenosyl-L-homocysteine. Its function is as follows. Catalyzes the methyl esterification of L-isoaspartyl residues in peptides and proteins that result from spontaneous decomposition of normal L-aspartyl and L-asparaginyl residues. It plays a role in the repair and/or degradation of damaged proteins. The polypeptide is Protein-L-isoaspartate O-methyltransferase (Shewanella pealeana (strain ATCC 700345 / ANG-SQ1)).